Here is a 399-residue protein sequence, read N- to C-terminus: Nicotinate phosphoribosyltransferase 1 (399 aa).

At H224 the chain carries Phosphohistidine; by autocatalysis.

The protein belongs to the NAPRTase family. In terms of processing, transiently phosphorylated on a His residue during the reaction cycle. Phosphorylation strongly increases the affinity for substrates and increases the rate of nicotinate D-ribonucleotide production. Dephosphorylation regenerates the low-affinity form of the enzyme, leading to product release.

It carries out the reaction nicotinate + 5-phospho-alpha-D-ribose 1-diphosphate + ATP + H2O = nicotinate beta-D-ribonucleotide + ADP + phosphate + diphosphate. It functions in the pathway cofactor biosynthesis; NAD(+) biosynthesis; nicotinate D-ribonucleotide from nicotinate: step 1/1. Functionally, catalyzes the synthesis of beta-nicotinate D-ribonucleotide from nicotinate and 5-phospho-D-ribose 1-phosphate at the expense of ATP. The chain is Nicotinate phosphoribosyltransferase 1 from Pseudomonas aeruginosa (strain ATCC 15692 / DSM 22644 / CIP 104116 / JCM 14847 / LMG 12228 / 1C / PRS 101 / PAO1).